The chain runs to 213 residues: Uridine kinase (213 aa).

Position 14–21 (14–21 (GASASGKS)) interacts with ATP.

This sequence belongs to the uridine kinase family.

It is found in the cytoplasm. The catalysed reaction is uridine + ATP = UMP + ADP + H(+). The enzyme catalyses cytidine + ATP = CMP + ADP + H(+). Its pathway is pyrimidine metabolism; CTP biosynthesis via salvage pathway; CTP from cytidine: step 1/3. It participates in pyrimidine metabolism; UMP biosynthesis via salvage pathway; UMP from uridine: step 1/1. The protein is Uridine kinase of Vibrio cholerae serotype O1 (strain ATCC 39315 / El Tor Inaba N16961).